Consider the following 410-residue polypeptide: Arginine biosynthesis bifunctional protein ArgJ (410 aa).

Thr158, Lys184, Thr195, Glu282, Asn405, and Ser410 together coordinate substrate. Thr195 functions as the Nucleophile in the catalytic mechanism.

Belongs to the ArgJ family. In terms of assembly, heterotetramer of two alpha and two beta chains.

It localises to the cytoplasm. It carries out the reaction N(2)-acetyl-L-ornithine + L-glutamate = N-acetyl-L-glutamate + L-ornithine. The enzyme catalyses L-glutamate + acetyl-CoA = N-acetyl-L-glutamate + CoA + H(+). The protein operates within amino-acid biosynthesis; L-arginine biosynthesis; L-ornithine and N-acetyl-L-glutamate from L-glutamate and N(2)-acetyl-L-ornithine (cyclic): step 1/1. It functions in the pathway amino-acid biosynthesis; L-arginine biosynthesis; N(2)-acetyl-L-ornithine from L-glutamate: step 1/4. In terms of biological role, catalyzes two activities which are involved in the cyclic version of arginine biosynthesis: the synthesis of N-acetylglutamate from glutamate and acetyl-CoA as the acetyl donor, and of ornithine by transacetylation between N(2)-acetylornithine and glutamate. The chain is Arginine biosynthesis bifunctional protein ArgJ from Bartonella henselae (strain ATCC 49882 / DSM 28221 / CCUG 30454 / Houston 1) (Rochalimaea henselae).